Here is a 275-residue protein sequence, read N- to C-terminus: MKNTIATFQEFKNKGKKISMLTAYDYSMAKIIDESGINGILIGDSLGMVIKGEEDTLSVTVDEIIYHTKSVKKGAKNALIVSDMPFLSYHTSVEEAVKNAGKMIKEGGANAVKLEGGASVIKQIKAIVDAQIPVMGHLGLTPQSVNAFGGFKIQGKSEEAAKRLIEDAKLIEDAGAFAIVLECVPKKVAEIITKEISIPTIGIGAGNECDGQILVYQDMLGMFDDFIPKFVKQYANLGAQMREAIQIYIGEVGEGSFPQDKHSFKIDEKELQKLY.

Mg(2+) is bound by residues aspartate 44 and aspartate 83. 3-methyl-2-oxobutanoate is bound by residues 44–45 (DS), aspartate 83, and lysine 113. Residue glutamate 115 coordinates Mg(2+). Glutamate 182 (proton acceptor) is an active-site residue.

Belongs to the PanB family. In terms of assembly, homodecamer; pentamer of dimers. Requires Mg(2+) as cofactor.

The protein localises to the cytoplasm. The catalysed reaction is 3-methyl-2-oxobutanoate + (6R)-5,10-methylene-5,6,7,8-tetrahydrofolate + H2O = 2-dehydropantoate + (6S)-5,6,7,8-tetrahydrofolate. It participates in cofactor biosynthesis; (R)-pantothenate biosynthesis; (R)-pantoate from 3-methyl-2-oxobutanoate: step 1/2. Catalyzes the reversible reaction in which hydroxymethyl group from 5,10-methylenetetrahydrofolate is transferred onto alpha-ketoisovalerate to form ketopantoate. This is 3-methyl-2-oxobutanoate hydroxymethyltransferase from Clostridium botulinum (strain Alaska E43 / Type E3).